The primary structure comprises 160 residues: Large ribosomal subunit protein uL15 (160 aa).

Over residues 1-13 (MKLNELRDNEGAA) the composition is skewed to basic and acidic residues. The tract at residues 1–51 (MKLNELRDNEGAARKKKRVARGPGSGKGKTAGRGIKGQKSRSGVALNGYEG) is disordered. Residues 23–35 (PGSGKGKTAGRGI) are compositionally biased toward gly residues.

It belongs to the universal ribosomal protein uL15 family. As to quaternary structure, part of the 50S ribosomal subunit.

Functionally, binds to the 23S rRNA. This chain is Large ribosomal subunit protein uL15, found in Cereibacter sphaeroides (strain ATCC 17025 / ATH 2.4.3) (Rhodobacter sphaeroides).